Consider the following 358-residue polypeptide: Polyadenylate-binding protein-interacting protein 11 (358 aa).

Residues 1 to 19 are compositionally biased toward low complexity; it reads MAVVETGAAATAADAGGVV. Residues 1-45 are disordered; that stretch reads MAVVETGAAATAADAGGVVIQPPPSSPPSSMTSQDSGVSSDDQNH. Polar residues predominate over residues 31–41; sequence MTSQDSGVSSD. The PAM2-like motif lies at 92 to 102; the sequence is KLNPMAEEFVP. The interval 136–164 is disordered; that stretch reads GGYGNENGGFRRKKSFGQGKRRMNARTSM. The segment covering 145-159 has biased composition (basic residues); sequence FRRKKSFGQGKRRMN. Residues 146–157 carry the Bipartite nuclear localization signal motif; that stretch reads RRKKSFGQGKRR. RRM domains lie at 173 to 248 and 270 to 346; these read RTVY…PSKT and RTIY…PSKT.

Expressed in cauline leaves, stems, immature siliques and primary inflorescences.

It localises to the nucleus. This chain is Polyadenylate-binding protein-interacting protein 11 (CID11), found in Arabidopsis thaliana (Mouse-ear cress).